The primary structure comprises 582 residues: GPI-anchor transamidase component PIGT (582 aa).

The first 25 residues, 1–25 (MAAAMPLGLPLRLLVLLLVGRGCCG), serve as a signal peptide directing secretion. Residues 26–529 (CAEGPRDSLR…NLPTPDFSMP (504 aa)) are Lumenal-facing. N168 carries N-linked (GlcNAc...) asparagine glycosylation. 2 disulfides stabilise this stretch: C199–C276 and C230–C235. 2 N-linked (GlcNAc...) asparagine glycosylation sites follow: N295 and N331. Residues N465, D525, S527, and N531 each coordinate a 2-acyl-6-[6-phosphoethanolamine-alpha-D-mannosyl-(1-&gt;2)-6-phosphoethanolamine-alpha-D-mannosyl-(1-&gt;6)-2-phosphoethanolamine-alpha-D-mannosyl-(1-&gt;4)-alpha-D-glucosaminyl]-1-(1-radyl,2-acyl-sn-glycero-3-phospho)-1D-myo-inositol. A helical membrane pass occupies residues 530–552 (YNVICLTCTVVAVCYGSFYNLLT). Residues 553–582 (RTFHIEEPKSGGLAKRLANLIRRARGVPPL) are Cytoplasmic-facing.

It belongs to the PIGT family. As to quaternary structure, heteropentamer. Part of the GPI-anchor transamidase complex, consisting of PIGK, PIGT, PIGS, PIGU and GAA1. In terms of processing, the disulfide bond between PIGK/GPI8 and PIGT is important for normal enzyme activity.

The protein resides in the endoplasmic reticulum membrane. Its pathway is glycolipid biosynthesis; glycosylphosphatidylinositol-anchor biosynthesis. Its function is as follows. Component of the glycosylphosphatidylinositol-anchor (GPI-anchor) transamidase (GPI-T) complex that catalyzes the formation of the linkage between a proprotein and a GPI-anchor and participates in GPI anchored protein biosynthesis. May play a crucial role in GPI-T complex assembly in the luminal layer. Binds GPI-anchor. This Mus musculus (Mouse) protein is GPI-anchor transamidase component PIGT.